The primary structure comprises 1220 residues: DNA-directed RNA polymerase subunit beta' (1220 aa).

Zn(2+) is bound by residues cysteine 61, cysteine 63, cysteine 76, and cysteine 79. Mg(2+) contacts are provided by aspartate 450, aspartate 452, and aspartate 454. The tract at residues 1197–1220 (QPEVEQEPTPDIPKLDDVAKSFEE) is disordered. Over residues 1209 to 1220 (PKLDDVAKSFEE) the composition is skewed to basic and acidic residues.

Belongs to the RNA polymerase beta' chain family. As to quaternary structure, the RNAP catalytic core consists of 2 alpha, 1 beta, 1 beta' and 1 omega subunit. When a sigma factor is associated with the core the holoenzyme is formed, which can initiate transcription. The cofactor is Mg(2+). It depends on Zn(2+) as a cofactor.

It carries out the reaction RNA(n) + a ribonucleoside 5'-triphosphate = RNA(n+1) + diphosphate. Its function is as follows. DNA-dependent RNA polymerase catalyzes the transcription of DNA into RNA using the four ribonucleoside triphosphates as substrates. The chain is DNA-directed RNA polymerase subunit beta' from Leuconostoc citreum (strain KM20).